Consider the following 206-residue polypeptide: Large ribosomal subunit protein mL40 (206 aa).

The N-terminal 46 residues, 1–46 (MATAAMLCAARALRPRSWIPGTCQAQVRHTHQRASLLSFWELIPMR), are a transit peptide targeting the mitochondrion. The disordered stretch occupies residues 170–190 (PFEKEGPHYTPPVPNYQAPEG).

The protein belongs to the mitochondrion-specific ribosomal protein mL40 family. In terms of assembly, component of the mitochondrial ribosome large subunit (39S) which comprises a 16S rRNA and about 50 distinct proteins.

It localises to the mitochondrion. The polypeptide is Large ribosomal subunit protein mL40 (Mrpl40) (Rattus norvegicus (Rat)).